A 381-amino-acid chain; its full sequence is Sensor histidine kinase FlgS (381 aa).

Residues 177–381 (HLAHEIRNPV…TFEIKILNAS (205 aa)) form the Histidine kinase domain. The residue at position 180 (His-180) is a Phosphohistidine; by autocatalysis.

Interacts (via its C-terminal kinase domain) with FlhA (via N-terminus). Autophosphorylated.

It carries out the reaction ATP + protein L-histidine = ADP + protein N-phospho-L-histidine.. Its function is as follows. Member of the two-component regulatory system FlgR/FlgS that induces the transcriptional induction of the genes needed in motility and flagellar biogenesis. Also plays an essential role in bacterial survival at pH 2.5 independently of FlgR. Functions as a sensor protein kinase which is autophosphorylated at a histidine residue and transfers its phosphate group to the conserved aspartic acid residue in the regulatory domain of FlgR. In turn, FlgR functions as a transcriptional regulator initiating transcription from RpoN-dependent promoters. This chain is Sensor histidine kinase FlgS (flgS), found in Helicobacter pylori (strain ATCC 700392 / 26695) (Campylobacter pylori).